The primary structure comprises 237 residues: CDP-diacylglycerol--serine O-phosphatidyltransferase (237 aa).

Helical transmembrane passes span isoleucine 3–methionine 23, isoleucine 25–isoleucine 45, valine 73–glycine 93, isoleucine 95–asparagine 115, tyrosine 124–leucine 144, phenylalanine 150–methionine 170, tryptophan 184–leucine 204, and leucine 207–valine 227.

The protein belongs to the CDP-alcohol phosphatidyltransferase class-I family.

Its subcellular location is the cell membrane. It catalyses the reaction a CDP-1,2-diacyl-sn-glycerol + L-serine = a 1,2-diacyl-sn-glycero-3-phospho-L-serine + CMP + H(+). The chain is CDP-diacylglycerol--serine O-phosphatidyltransferase (pssA) from Helicobacter pylori (strain J99 / ATCC 700824) (Campylobacter pylori J99).